A 492-amino-acid polypeptide reads, in one-letter code: Lysine--tRNA ligase (492 aa).

2 residues coordinate Mg(2+): Glu403 and Glu410.

The protein belongs to the class-II aminoacyl-tRNA synthetase family. In terms of assembly, homodimer. The cofactor is Mg(2+).

It is found in the cytoplasm. The enzyme catalyses tRNA(Lys) + L-lysine + ATP = L-lysyl-tRNA(Lys) + AMP + diphosphate. This chain is Lysine--tRNA ligase, found in Mycoplasmoides gallisepticum (strain R(low / passage 15 / clone 2)) (Mycoplasma gallisepticum).